Here is a 544-residue protein sequence, read N- to C-terminus: Dynein axonemal assembly factor 3 (544 aa).

Disordered regions lie at residues 328–350 (RAAE…PAAP) and 448–544 (TFAR…YPIP). Residues 522–536 (PTGSQAPKSENQTVP) show a composition bias toward polar residues.

The protein belongs to the DNAAF3 family.

It is found in the cytoplasm. Its subcellular location is the dynein axonemal particle. Required for the assembly of axonemal inner and outer dynein arms. Involved in preassembly of dyneins into complexes before their transport into cilia. The sequence is that of Dynein axonemal assembly factor 3 (DNAAF3) from Bos taurus (Bovine).